A 551-amino-acid chain; its full sequence is MSRNFHIFFLLVSIIQVGNSADSSEITHKPAGIYVRLNQKAVDYVADLASDALPAILNNLSPPDIVTDMAKITKLHISNVAKPNLSAKFIDGKGVAYNISLASFRASAYAEISVFVWSYEGDFTAELRELSIESELHFDYNGTTTVNASVCNVTHSELSLVFPPGSSLSALQSEIKGQIVSALRDAVCTTAVEALTFVMAQKPIPPESPNYQKPEAGDPNGFSVAELGASLCQVDTVNGFEDSEQEEGNVETTVAPTPDDDNSTLTTEETQKSYWGVDLSVNHPPTFTDEDMIIGLDGGILFNGWKADSAQQLQILNKTRLDKKMVGILLSEYIPNTLFHHIYMYDLGNFKHRYTPSSLPKILQKLSKAVCSKCYVEVSANLTEQPILQIDAHLGARVQLSGNVSIMFHGREQLHDVLHANTKLHVTLKPTVRHSRIFGDVSLTNVDVNVFDLGLGGPLAAPIEKLFSFVVPRVLWPQVKKRLRFAMNRRGVKLPIFCGVELEHTELDFVDHAVLLNTDFSFDLPLFLAKFKKYLDAKSKINPNLPKYVII.

The signal sequence occupies residues Met1–Ser20. Cys151 and Cys232 are joined by a disulfide. Residues Glu241–Leu265 form a disordered region.

It belongs to the BPI/LBP/Plunc superfamily. BPI/LBP family. Interacts with ttr-52. Expressed in the body wall muscle cells and detected at the basal surface of pharyngeal cells and basal-lateral membranes of the intestine.

Its subcellular location is the secreted. In terms of biological role, plays a role in the uptake of a range of molecules including phosphatidylserine, lipids and xenobiotic compounds from the intestine to surrounding tissues. Possesses lipid transfer activity. Mediates transport of lipids from intestine to reproductive tract. Binds phosphatidylserine. Plays a role in efficient clearance of cell corpses by mediating phosphatidylserine appearance on phagocytic cells, thus promoting phagocytic engulfment of apoptotic cells. Vital for embryonic development. The sequence is that of Nose resistant to fluoxetine protein 5 from Caenorhabditis elegans.